A 156-amino-acid polypeptide reads, in one-letter code: Transcription elongation factor GreA (156 aa).

Residues 1 to 32 adopt a coiled-coil conformation; that stretch reads MKKVRLTREGYEKLKKELEDLKRKFMYEISER.

The protein belongs to the GreA/GreB family.

Necessary for efficient RNA polymerase transcription elongation past template-encoded arresting sites. The arresting sites in DNA have the property of trapping a certain fraction of elongating RNA polymerases that pass through, resulting in locked ternary complexes. Cleavage of the nascent transcript by cleavage factors such as GreA or GreB allows the resumption of elongation from the new 3'terminus. GreA releases sequences of 2 to 3 nucleotides. This chain is Transcription elongation factor GreA, found in Thermotoga maritima (strain ATCC 43589 / DSM 3109 / JCM 10099 / NBRC 100826 / MSB8).